We begin with the raw amino-acid sequence, 157 residues long: Phosphopantetheine adenylyltransferase (157 aa).

Thr-8 contributes to the substrate binding site. ATP contacts are provided by residues 8–9 (TF) and His-16. 3 residues coordinate substrate: Lys-40, Thr-72, and Arg-86. ATP-binding positions include 87 to 89 (GLR), Glu-97, and 122 to 128 (YSFLSSS).

The protein belongs to the bacterial CoaD family. Homohexamer. Requires Mg(2+) as cofactor.

It is found in the cytoplasm. The catalysed reaction is (R)-4'-phosphopantetheine + ATP + H(+) = 3'-dephospho-CoA + diphosphate. The protein operates within cofactor biosynthesis; coenzyme A biosynthesis; CoA from (R)-pantothenate: step 4/5. Its function is as follows. Reversibly transfers an adenylyl group from ATP to 4'-phosphopantetheine, yielding dephospho-CoA (dPCoA) and pyrophosphate. This Prochlorococcus marinus (strain MIT 9312) protein is Phosphopantetheine adenylyltransferase.